Consider the following 540-residue polypeptide: Chaperonin GroEL 1 (540 aa).

Residues 29–32 (TIGP), 86–90 (DGTTT), Gly415, 479–481 (NAA), and Asp495 each bind ATP.

The protein belongs to the chaperonin (HSP60) family. As to quaternary structure, forms a cylinder of 14 subunits composed of two heptameric rings stacked back-to-back. Interacts with the co-chaperonin GroES.

The protein localises to the cytoplasm. The enzyme catalyses ATP + H2O + a folded polypeptide = ADP + phosphate + an unfolded polypeptide.. Together with its co-chaperonin GroES, plays an essential role in assisting protein folding. The GroEL-GroES system forms a nano-cage that allows encapsulation of the non-native substrate proteins and provides a physical environment optimized to promote and accelerate protein folding. This Streptomyces albus G protein is Chaperonin GroEL 1.